The primary structure comprises 137 residues: Large ribosomal subunit protein uL16 (137 aa).

The protein belongs to the universal ribosomal protein uL16 family. As to quaternary structure, part of the 50S ribosomal subunit.

Its function is as follows. Binds 23S rRNA and is also seen to make contacts with the A and possibly P site tRNAs. This Rhodopseudomonas palustris (strain HaA2) protein is Large ribosomal subunit protein uL16.